A 1380-amino-acid polypeptide reads, in one-letter code: DNA-directed RNA polymerase subunit beta (1380 aa).

This sequence belongs to the RNA polymerase beta chain family. In terms of assembly, the RNAP catalytic core consists of 2 alpha, 1 beta, 1 beta' and 1 omega subunit. When a sigma factor is associated with the core the holoenzyme is formed, which can initiate transcription.

The catalysed reaction is RNA(n) + a ribonucleoside 5'-triphosphate = RNA(n+1) + diphosphate. In terms of biological role, DNA-dependent RNA polymerase catalyzes the transcription of DNA into RNA using the four ribonucleoside triphosphates as substrates. The protein is DNA-directed RNA polymerase subunit beta of Ehrlichia ruminantium (strain Gardel).